The primary structure comprises 337 residues: G-protein coupled receptor 65 (337 aa).

Residues 1–5 lie on the Extracellular side of the membrane; that stretch reads MNSTC. A glycan (N-linked (GlcNAc...) asparagine) is linked at asparagine 2. 2 disulfides stabilise this stretch: cysteine 5/cysteine 160 and cysteine 87/cysteine 170. A helical transmembrane segment spans residues 6–42; sequence IEEQHDLDHYLFPIVYIFVIIVSIPANIGSLCVSFLQ. Topologically, residues 43–46 are cytoplasmic; the sequence is AKKE. A helical transmembrane segment spans residues 47-77; sequence SELGIYLFSLSLSDLLYALTLPLWIDYTWNK. The Extracellular segment spans residues 78 to 82; that stretch reads DNWTF. Asparagine 79 carries N-linked (GlcNAc...) asparagine glycosylation. A helical membrane pass occupies residues 83-118; sequence SPALCKGSAFLMYMNFYSSTAFLTCIAVDRYLAVVY. At 119–126 the chain is on the cytoplasmic side; the sequence is PLKFFFLR. The helical transmembrane segment at 127 to 153 threads the bilayer; sequence TRRFALMVSLSIWILETIFNAVMLWED. Residues 154-174 are Extracellular-facing; it reads ETVVEYCDAEKSNFTLCYDKY. Residues 154 to 174 are extracellular loop 2 (ECL2); the sequence is ETVVEYCDAEKSNFTLCYDKY. The N-linked (GlcNAc...) asparagine glycan is linked to asparagine 166. Residues 175 to 212 form a helical membrane-spanning segment; that stretch reads PLEKWQINLNLFRTCTGYAIPLVTILICNRKVYQAVRH. Residues 213–216 lie on the Cytoplasmic side of the membrane; the sequence is NKAT. A helical membrane pass occupies residues 217–252; sequence ENKEKKRIIKLLVSITVTFVLCFTPFHVMLLIRCIL. Topologically, residues 253–264 are extracellular; that stretch reads EHAVNFEDHSNS. The helical transmembrane segment at 265 to 293 threads the bilayer; it reads GKRTYTMYRITVALTSLNCVADPILYCFV. Residues 294-337 are Cytoplasmic-facing; sequence TETGRYDMWNILKFCTGRCNTSQRQRKRILSVSTKDTMELEVLE.

It belongs to the G-protein coupled receptor 1 family. As to expression, predominantly expressed in thymus, spleen, lymph nodes, small intestine, lung, placenta and peripheral blood leukocytes.

It is found in the cell membrane. It localises to the early endosome membrane. Its subcellular location is the late endosome membrane. Activated by a network of residues that connects an extracellular-facing cavity to Glu-142, a conserved charged residue buried in the transmembrane core of the receptor. Protonation likely drives conformational changes in extracellular loop 2 (ECL2), which stabilizes movement of transmembrane 3 (TM3) and a series of rearrangements that connect the extracellular-facing cavity to Glu-142, a residue only conserved in proton-sensing G-protein coupled receptors. Activated by BTB09089, a positive allosteric modulator. In terms of biological role, proton-sensing G-protein coupled receptor activated by extracellular pH, which is required to monitor pH changes and generate adaptive reactions. Activated by an optimal pH of 7.4. Ligand binding causes a conformation change that triggers signaling via guanine nucleotide-binding proteins (G proteins) and modulates the activity of downstream effectors, such as adenylate cyclase. GPR65 is mainly coupled to G(s) G proteins and mediates activation of adenylate cyclase activity. May also act as a receptor for the glycosphingolipid psychosine (PSY) and several related glycosphingolipids. Plays a role in immune response by maintaining lysosome function and regulating T-cell metabolism. Acts as a regulator of inflammation by mediating pH-sensing of extracellular acidification which takes place in inflamed tissues: activation regulates endo-lysosomal function of immune cells and T-cell metabolism. Constitutively active in endosomes and stimulates adenylate cyclase production from endosomes independently from extracellular pH changes. In Homo sapiens (Human), this protein is G-protein coupled receptor 65.